Here is an 862-residue protein sequence, read N- to C-terminus: Semaphorin-4D (862 aa).

Positions 1-21 (MRMCTPIRGLLMALAVMFGTA) are cleaved as a signal peptide. Residues 22–500 (MAFAPIPRIT…SNSGVVQAPL (479 aa)) enclose the Sema domain. At 22-734 (MAFAPIPRIT…TMYLKSSDNR (713 aa)) the chain is on the extracellular side. N-linked (GlcNAc...) asparagine glycosylation is found at N49 and N77. Cystine bridges form between C97/C108 and C126/C135. N-linked (GlcNAc...) asparagine glycans are attached at residues N139 and N191. 2 cysteine pairs are disulfide-bonded: C257-C370 and C281-C326. Residues N329, N379, and N419 are each glycosylated (N-linked (GlcNAc...) asparagine). One can recognise a PSI domain in the interval 502 to 551 (FCGKHGTCEDCVLARDPYCAWSPPTATCVALHQTESPSRGLIQEMSGDAS). Disulfide bonds link C503–C520, C509–C553, C512–C529, and C576–C624. Positions 554–636 (PDKSKGSYRQ…EERVKNKTVF (83 aa)) constitute an Ig-like C2-type domain. Residues N613 and N632 are each glycosylated (N-linked (GlcNAc...) asparagine). A helical membrane pass occupies residues 735 to 755 (LLMSLFLFFFVLFLCLFFYNC). The Cytoplasmic portion of the chain corresponds to 756-862 (YKGYLPRQCL…KFADSDADGD (107 aa)). The interval 794–837 (VEPGSFSQQNGEHPKPALDTGYETEQDTITSKVPTDREDSQRID) is disordered. Residues 827–837 (PTDREDSQRID) show a composition bias toward basic and acidic residues. Phosphoserine is present on S833.

It belongs to the semaphorin family. As to quaternary structure, homodimer. Interacts with PLXNB2. Interacts with PLXNB1. As to expression, strongly expressed in skeletal muscle, peripheral blood lymphocytes, spleen, and thymus and also expressed at lower levels in testes, brain, kidney, small intestine, prostate, heart, placenta, lung and pancreas, but not in colon and liver.

The protein resides in the cell membrane. In terms of biological role, cell surface receptor for PLXNB1 and PLXNB2 that plays an important role in cell-cell signaling. Regulates GABAergic synapse development. Promotes the development of inhibitory synapses in a PLXNB1-dependent manner. Modulates the complexity and arborization of developing neurites in hippocampal neurons by activating PLXNB1 and interaction with PLXNB1 mediates activation of RHOA. Promotes the migration of cerebellar granule cells. Plays a role in the immune system; induces B-cells to aggregate and improves their viability (in vitro). Induces endothelial cell migration through the activation of PTK2B/PYK2, SRC, and the phosphatidylinositol 3-kinase-AKT pathway. In Homo sapiens (Human), this protein is Semaphorin-4D (SEMA4D).